A 61-amino-acid chain; its full sequence is SPbeta prophage-derived uncharacterized protein YotK (61 aa).

Residues 7–57 adopt a coiled-coil conformation; it reads SIQTLLNKMDRQMKTVKEAIEEKDLQRAHRNLINLADNNEELMQEIRWVKK.

In Bacillus subtilis (strain 168), this protein is SPbeta prophage-derived uncharacterized protein YotK (yotK).